The chain runs to 605 residues: Inactive LRR receptor-like serine/threonine-protein kinase BIR2 (605 aa).

An N-terminal signal peptide occupies residues 1–28 (MKEIGSKPRKLLPLCFIIFLCFCSSVMA). Residues 29 to 229 (ADEDDIRCLR…CGGLSKKNLG (201 aa)) lie on the Extracellular side of the membrane. The N-linked (GlcNAc...) asparagine glycan is linked to N58. 4 LRR repeats span residues 101–125 (CASL…LCNW), 127–150 (PFLV…LAKC), 152–173 (FVNS…QFSA), and 174–197 (LGRL…FFSS). A helical membrane pass occupies residues 230–250 (IIIAAGVFGAAASMLLAFGIW). The Cytoplasmic portion of the chain corresponds to 251 to 605 (WYYHLKWTRR…IFDTQENEKV (355 aa)). A Phosphoserine; by BAK1 modification is found at S271. T283 carries the phosphothreonine; by BAK1 modification. S286 bears the Phosphoserine; by BAK1 mark. T304 bears the Phosphothreonine; by BAK1 mark. Residues 307–578 (FNSENIIVST…FQAYQSLKAI (272 aa)) form the Protein kinase domain. An ATP-binding site is contributed by 313 to 321 (IVSTRTGTT). S330 is modified (phosphoserine; by BAK1). Position 335 (K335) interacts with ATP. S389 is subject to Phosphoserine; by BAK1. T402 carries the post-translational modification Phosphothreonine. Phosphoserine; by BAK1 is present on residues S448 and S462. T466 is modified (phosphothreonine; by BAK1). Y479 is subject to Phosphotyrosine. Position 482 is a phosphothreonine (T482). At S486 the chain carries Phosphoserine. T533 bears the Phosphothreonine; by BAK1 mark.

The protein belongs to the protein kinase superfamily. Ser/Thr protein kinase family. Interacts constitutively with BAK1, when phosphorylated, thereby preventing interaction with the ligand-binding LRR-RLK FLS2. Upon infection, pathogen-associated molecular patterns (PAMP) perception leads to BIR2 release from the BAK1 complex and enables the recruitment of BAK1 into the FLS2 complex. In terms of processing, phosphorylated by BAK1, this interacts promotes interaction with BAK1.

Its subcellular location is the cell membrane. Its function is as follows. Pseudokinases lacking protein kinase activity and unable to bind ATP-analogs. Negative regulator of pathogen-associated molecular patterns- (PAMP-) triggered immunity by limiting BAK1-receptor complex formation in the absence of ligands. In Arabidopsis thaliana (Mouse-ear cress), this protein is Inactive LRR receptor-like serine/threonine-protein kinase BIR2.